The sequence spans 778 residues: Probable glutamine--tRNA ligase (778 aa).

Positions 188–205 are enriched in basic and acidic residues; the sequence is LKPQTKANDKPKAAKPKA. The disordered stretch occupies residues 188–219; that stretch reads LKPQTKANDKPKAAKPKAEVTPAAQTAEAASD. Residues 273–283 carry the 'HIGH' region motif; it reads PEPNGILHIGH. Residues 274–276 and 280–286 each bind ATP; these read EPN and HIGHAKA. Residues Asp306 and Tyr441 each contribute to the L-glutamine site. Residues Thr460, 489–490, and 497–499 each bind ATP; these read RL and VSK. A 'KMSKS' region motif is present at residues 496-500; that stretch reads LVSKR.

The protein belongs to the class-I aminoacyl-tRNA synthetase family.

The catalysed reaction is tRNA(Gln) + L-glutamine + ATP = L-glutaminyl-tRNA(Gln) + AMP + diphosphate. The chain is Probable glutamine--tRNA ligase from Drosophila melanogaster (Fruit fly).